Reading from the N-terminus, the 185-residue chain is Ribosome-recycling factor (185 aa).

This sequence belongs to the RRF family.

The protein resides in the cytoplasm. Responsible for the release of ribosomes from messenger RNA at the termination of protein biosynthesis. May increase the efficiency of translation by recycling ribosomes from one round of translation to another. The sequence is that of Ribosome-recycling factor from Alkalilimnicola ehrlichii (strain ATCC BAA-1101 / DSM 17681 / MLHE-1).